A 633-amino-acid polypeptide reads, in one-letter code: MGNYRWPSKLSKLSLRAKQTNLYRVILIAILCVTFYFVGVWQHSGRGISRSSISNHELTSVPCTFPHQTTPILNFASRHTAPDLPPTITDARVVQIPSCGVEFSEYTPCEFVNRSLNFPRERLIYRERHCPEKHEIVRCRIPAPYGYSLPFRWPESRDVAWFANVPHTELTVEKKNQNWVRYEKDRFLFPGGGTMFPRGADAYIDEIGRLINLKDGSIRTAIDTGCGVASFGAYLMSRNIVTMSFAPRDTHEAQVQFALERGVPAIIGVLASIRLPFPARAFDIAHCSRCLIPWGQYNGTYLIEVDRVLRPGGYWILSGPPINWQRHWKGWERTRDDLNSEQSQIERVARSLCWRKLVQREDLAVWQKPTNHVHCKRNRIALGRPPFCHRTLPNQGWYTKLETCLTPLPEVTGSEIKEVAGGQLARWPERLNALPPRIKSGSLEGITEDEFVSNTEKWQRRVSYYKKYDQQLAETGRYRNFLDMNAHLGGFASALVDDPVWVMNVVPVEASVNTLGVIYERGLIGTYQNWCEAMSTYPRTYDFIHADSVFSLYKDRCDMEDILLEMDRILRPKGSVIIRDDIDVLTKVKKITDAMQWEGRIGDHENGPLEREKILFLVKEYWTAPAPDQSSDP.

Over 1-24 (MGNYRWPSKLSKLSLRAKQTNLYR) the chain is Cytoplasmic. The helical; Signal-anchor for type II membrane protein transmembrane segment at 25–45 (VILIAILCVTFYFVGVWQHSG) threads the bilayer. Topologically, residues 46–633 (RGISRSSISN…APAPDQSSDP (588 aa)) are lumenal. Asn113 and Asn298 each carry an N-linked (GlcNAc...) asparagine glycan.

The protein belongs to the methyltransferase superfamily.

It is found in the golgi apparatus membrane. This Arabidopsis thaliana (Mouse-ear cress) protein is Probable methyltransferase PMT15.